Consider the following 362-residue polypeptide: Protein Wnt-16 (362 aa).

The first 29 residues, 1–29 (MDRAALLGLSRLCALWAAVLALFPCGAQG), serve as a signal peptide directing secretion. Disulfide bonds link Cys-81/Cys-92, Cys-136/Cys-144, and Cys-146/Cys-165. The N-linked (GlcNAc...) asparagine glycan is linked to Asn-140. N-linked (GlcNAc...) asparagine glycosylation is present at Asn-186. 8 disulfide bridges follow: Cys-218-Cys-232, Cys-220-Cys-227, Cys-291-Cys-322, Cys-307-Cys-317, Cys-321-Cys-361, Cys-337-Cys-352, Cys-339-Cys-349, and Cys-344-Cys-345. Residue Ser-224 is the site of O-palmitoleoyl serine; by PORCN attachment. A glycan (N-linked (GlcNAc...) asparagine) is linked at Asn-308.

The protein belongs to the Wnt family. Palmitoleoylation is required for efficient binding to frizzled receptors. Depalmitoleoylation leads to Wnt signaling pathway inhibition.

Its subcellular location is the secreted. It is found in the extracellular space. The protein resides in the extracellular matrix. Functionally, ligand for members of the frizzled family of seven transmembrane receptors. Probable developmental protein. May be a signaling molecule which affects the development of discrete regions of tissues. Is likely to signal over only few cell diameters. The polypeptide is Protein Wnt-16 (WNT16) (Bos taurus (Bovine)).